A 186-amino-acid chain; its full sequence is dCTP deaminase (186 aa).

107–112 (KSTYAR) contacts dCTP. The active-site Proton donor/acceptor is Glu133. Gln152, Tyr166, and Gln176 together coordinate dCTP.

This sequence belongs to the dCTP deaminase family. As to quaternary structure, homotrimer.

It catalyses the reaction dCTP + H2O + H(+) = dUTP + NH4(+). It participates in pyrimidine metabolism; dUMP biosynthesis; dUMP from dCTP (dUTP route): step 1/2. Catalyzes the deamination of dCTP to dUTP. The chain is dCTP deaminase from Campylobacter jejuni subsp. jejuni serotype O:6 (strain 81116 / NCTC 11828).